We begin with the raw amino-acid sequence, 512 residues long: Probable amidase At4g34880 (512 aa).

Active-site charge relay system residues include K117 and S198. S222 serves as the catalytic Acyl-ester intermediate.

It belongs to the amidase family. In terms of tissue distribution, expressed in vasculature of roots, cotyledons, leaves and sepals.

It catalyses the reaction a monocarboxylic acid amide + H2O = a monocarboxylate + NH4(+). This is Probable amidase At4g34880 from Arabidopsis thaliana (Mouse-ear cress).